The sequence spans 158 residues: uncharacterized protein (158 aa).

4 consecutive transmembrane segments (helical) span residues 12–32, 39–59, 90–110, and 113–133; these read IITL…AVVV, LDIL…SLSV, LIYL…FNTI, and IIST…WLPL.

It localises to the cell membrane. This is an uncharacterized protein from Mycoplasma genitalium (strain ATCC 33530 / DSM 19775 / NCTC 10195 / G37) (Mycoplasmoides genitalium).